The sequence spans 70 residues: DNA-directed RNA polymerase subunit epsilon (70 aa).

Belongs to the RNA polymerase subunit epsilon family. As to quaternary structure, RNAP is composed of a core of 2 alpha, a beta and a beta' subunit. The core is associated with a delta subunit, and at least one of epsilon or omega. When a sigma factor is associated with the core the holoenzyme is formed, which can initiate transcription.

The enzyme catalyses RNA(n) + a ribonucleoside 5'-triphosphate = RNA(n+1) + diphosphate. Functionally, a non-essential component of RNA polymerase (RNAP). The sequence is that of DNA-directed RNA polymerase subunit epsilon from Bacillus cereus (strain ZK / E33L).